Here is a 284-residue protein sequence, read N- to C-terminus: Probable palmitoyltransferase ZDHHC24 (284 aa).

Topologically, residues 1 to 18 (MGEPWAARGTEGAPARMP) are cytoplasmic. A helical transmembrane segment spans residues 19–39 (VVFTALWAAVVVLELTYVMVL). Over 40–52 (GPGPPPLEPLARA) the chain is Extracellular. The helical transmembrane segment at 53–73 (LQLALAAYQLLNLLGNMGLFL) threads the bilayer. The Cytoplasmic segment spans residues 74–137 (RSDPSIRGVM…GRCVGFHNYR (64 aa)). Residues 94 to 144 (AYCYQCQSQVPPRSGHCSACRVCILRRDHHCRLLGRCVGFHNYRPFLCLLL) form the DHHC domain. Cysteine 124 serves as the catalytic S-palmitoyl cysteine intermediate. The chain crosses the membrane as a helical span at residues 138 to 158 (PFLCLLLHAAGVLLHISVLLS). Residues 159–166 (PALSALLQ) lie on the Extracellular side of the membrane. Residues 167–187 (AHSALYTVALLLLPWLMLLTG) traverse the membrane as a helical segment. Over 188 to 195 (KVSLAQFA) the chain is Cytoplasmic. Residues 196 to 216 (LAFVVDTCVAGALLCGAGLLF) form a helical membrane-spanning segment. The Extracellular segment spans residues 217-284 (HGMLLLRGQT…TPTDVGLVTS (68 aa)).

It belongs to the DHHC palmitoyltransferase family.

The protein resides in the membrane. The enzyme catalyses L-cysteinyl-[protein] + hexadecanoyl-CoA = S-hexadecanoyl-L-cysteinyl-[protein] + CoA. Its function is as follows. Probable palmitoyltransferase that could catalyze the addition of palmitate onto various protein substrates. This Rattus norvegicus (Rat) protein is Probable palmitoyltransferase ZDHHC24 (Zdhhc24).